The primary structure comprises 228 residues: Endonuclease V (228 aa).

2 residues coordinate Mg(2+): aspartate 43 and aspartate 109.

Belongs to the endonuclease V family. It depends on Mg(2+) as a cofactor.

It is found in the cytoplasm. The enzyme catalyses Endonucleolytic cleavage at apurinic or apyrimidinic sites to products with a 5'-phosphate.. In terms of biological role, DNA repair enzyme involved in the repair of deaminated bases. Selectively cleaves double-stranded DNA at the second phosphodiester bond 3' to a deoxyinosine leaving behind the intact lesion on the nicked DNA. The protein is Endonuclease V of Dictyoglomus turgidum (strain DSM 6724 / Z-1310).